A 467-amino-acid chain; its full sequence is 3-isopropylmalate dehydratase large subunit (467 aa).

[4Fe-4S] cluster contacts are provided by cysteine 347, cysteine 407, and cysteine 410.

Belongs to the aconitase/IPM isomerase family. LeuC type 1 subfamily. Heterodimer of LeuC and LeuD. Requires [4Fe-4S] cluster as cofactor.

The catalysed reaction is (2R,3S)-3-isopropylmalate = (2S)-2-isopropylmalate. Its pathway is amino-acid biosynthesis; L-leucine biosynthesis; L-leucine from 3-methyl-2-oxobutanoate: step 2/4. Its function is as follows. Catalyzes the isomerization between 2-isopropylmalate and 3-isopropylmalate, via the formation of 2-isopropylmaleate. The sequence is that of 3-isopropylmalate dehydratase large subunit from Synechococcus sp. (strain JA-2-3B'a(2-13)) (Cyanobacteria bacterium Yellowstone B-Prime).